Here is a 288-residue protein sequence, read N- to C-terminus: Thiamine-monophosphate kinase (288 aa).

Asp20, Thr30, and Asp32 together coordinate Mg(2+). A substrate-binding site is contributed by Asp39. 2 residues coordinate Mg(2+): Asp60 and Asp107. Residues Gly106–Asp107 and Arg130 each bind ATP. Asp188 is a binding site for Mg(2+). Residue Ser190 coordinates ATP. Asp191 is a binding site for Mg(2+). Trp286 is a binding site for substrate.

This sequence belongs to the thiamine-monophosphate kinase family.

It catalyses the reaction thiamine phosphate + ATP = thiamine diphosphate + ADP. Its pathway is cofactor biosynthesis; thiamine diphosphate biosynthesis; thiamine diphosphate from thiamine phosphate: step 1/1. Functionally, catalyzes the ATP-dependent phosphorylation of thiamine-monophosphate (TMP) to form thiamine-pyrophosphate (TPP), the active form of vitamin B1. The sequence is that of Thiamine-monophosphate kinase from Halobacterium salinarum (strain ATCC 700922 / JCM 11081 / NRC-1) (Halobacterium halobium).